A 1091-amino-acid chain; its full sequence is ATP-dependent helicase/deoxyribonuclease subunit B (1091 aa).

It belongs to the helicase family. AddB/RexB type 2 subfamily. As to quaternary structure, heterodimer of AddA and RexB. The cofactor is Mg(2+).

The heterodimer acts as both an ATP-dependent DNA helicase and an ATP-dependent, dual-direction single-stranded exonuclease. Recognizes the chi site generating a DNA molecule suitable for the initiation of homologous recombination. This subunit has 5' -&gt; 3' nuclease activity but not helicase activity. This Streptococcus pneumoniae serotype 19F (strain G54) protein is ATP-dependent helicase/deoxyribonuclease subunit B.